The primary structure comprises 532 residues: Cytochrome P450 12b1, mitochondrial (532 aa).

C480 contributes to the heme binding site.

This sequence belongs to the cytochrome P450 family. The cofactor is heme.

Its subcellular location is the mitochondrion. In terms of biological role, probably involved in steroid hormones biosynthesis. This Drosophila acanthoptera (Fruit fly) protein is Cytochrome P450 12b1, mitochondrial (Cyp12b1).